The sequence spans 131 residues: Sec-independent protein translocase protein TatB (131 aa).

The helical transmembrane segment at 1–21 threads the bilayer; that stretch reads MFDISFAELVVVGIVALIVIG. Composition is skewed to polar residues over residues 71–93 and 111–131; these read NSFE…TQSA and PVNT…QPNS. Positions 71–131 are disordered; the sequence is NSFENSVRSE…APAEPRQPNS (61 aa).

The protein belongs to the TatB family. In terms of assembly, the Tat system comprises two distinct complexes: a TatABC complex, containing multiple copies of TatA, TatB and TatC subunits, and a separate TatA complex, containing only TatA subunits. Substrates initially bind to the TatABC complex, which probably triggers association of the separate TatA complex to form the active translocon.

The protein localises to the cell inner membrane. Its function is as follows. Part of the twin-arginine translocation (Tat) system that transports large folded proteins containing a characteristic twin-arginine motif in their signal peptide across membranes. Together with TatC, TatB is part of a receptor directly interacting with Tat signal peptides. TatB may form an oligomeric binding site that transiently accommodates folded Tat precursor proteins before their translocation. This is Sec-independent protein translocase protein TatB from Nitrosomonas europaea (strain ATCC 19718 / CIP 103999 / KCTC 2705 / NBRC 14298).